A 187-amino-acid polypeptide reads, in one-letter code: Oleosin Zm-II (187 aa).

Ala2 is subject to N-acetylalanine. Positions 2–51 (ADRDRSGIYGGAHATYGQQQQQGGGGRPMGEQVKKGMLHDKGPTASQALT) are polar. The interval 17-42 (YGQQQQQGGGGRPMGEQVKKGMLHDK) is disordered. Basic and acidic residues predominate over residues 33-42 (QVKKGMLHDK). The next 3 helical transmembrane spans lie at 50-70 (LTVA…GLAL), 83-103 (VFLI…TAVM), and 104-124 (GFLT…CLAN). The interval 52-123 (VATLFPLGGL…GGLSSLTCLA (72 aa)) is hydrophobic. Over residues 155–169 (TAQAGQAIQGRAQEA) the composition is skewed to low complexity. Positions 155 to 187 (TAQAGQAIQGRAQEAGTGGGAGAGAGGGGRASS) are disordered. The segment covering 170–187 (GTGGGAGAGAGGGGRASS) has biased composition (gly residues).

Belongs to the oleosin family. The N-terminus is blocked. Found in embryonic axis, scutellum, and aleurone layer.

It localises to the lipid droplet. It is found in the membrane. Its function is as follows. May have a structural role to stabilize the lipid body during desiccation of the seed by preventing coalescence of the oil. Probably interacts with both lipid and phospholipid moieties of lipid bodies. May also provide recognition signals for specific lipase anchorage in lipolysis during seedling growth. This chain is Oleosin Zm-II (OLE18), found in Zea mays (Maize).